We begin with the raw amino-acid sequence, 171 residues long: ATP synthase subunit b (171 aa).

Residues Val-2–Leu-22 traverse the membrane as a helical segment.

The protein belongs to the ATPase B chain family. In terms of assembly, F-type ATPases have 2 components, F(1) - the catalytic core - and F(0) - the membrane proton channel. F(1) has five subunits: alpha(3), beta(3), gamma(1), delta(1), epsilon(1). F(0) has three main subunits: a(1), b(2) and c(10-14). The alpha and beta chains form an alternating ring which encloses part of the gamma chain. F(1) is attached to F(0) by a central stalk formed by the gamma and epsilon chains, while a peripheral stalk is formed by the delta and b chains.

It is found in the cell inner membrane. In terms of biological role, f(1)F(0) ATP synthase produces ATP from ADP in the presence of a proton or sodium gradient. F-type ATPases consist of two structural domains, F(1) containing the extramembraneous catalytic core and F(0) containing the membrane proton channel, linked together by a central stalk and a peripheral stalk. During catalysis, ATP synthesis in the catalytic domain of F(1) is coupled via a rotary mechanism of the central stalk subunits to proton translocation. Functionally, component of the F(0) channel, it forms part of the peripheral stalk, linking F(1) to F(0). The protein is ATP synthase subunit b of Helicobacter acinonychis (strain Sheeba).